The chain runs to 353 residues: uncharacterized protein (353 aa).

The next 9 helical transmembrane spans lie at Ala-16–Gly-36, Val-77–Leu-97, Tyr-106–Leu-128, Ser-140–Ala-160, Leu-167–Ala-187, Gly-208–Ile-228, Leu-263–Pro-283, His-296–Ser-316, and Ile-323–Leu-343.

It belongs to the binding-protein-dependent transport system permease family. FecCD subfamily. As to quaternary structure, the complex is composed of two ATP-binding proteins (YvrA), two transmembrane proteins (YvrB) and a solute-binding protein (YvrC).

It is found in the cell membrane. In terms of biological role, probably part of an ABC transporter complex. Probably responsible for the translocation of the substrate across the membrane. This is an uncharacterized protein from Bacillus subtilis (strain 168).